The sequence spans 573 residues: Sulfite reductase [NADPH] hemoprotein beta-component (573 aa).

[4Fe-4S] cluster-binding residues include cysteine 438, cysteine 444, cysteine 483, and cysteine 487. Cysteine 487 serves as a coordination point for siroheme.

It belongs to the nitrite and sulfite reductase 4Fe-4S domain family. Alpha(8)-beta(8). The alpha component is a flavoprotein, the beta component is a hemoprotein. It depends on siroheme as a cofactor. Requires [4Fe-4S] cluster as cofactor.

The catalysed reaction is hydrogen sulfide + 3 NADP(+) + 3 H2O = sulfite + 3 NADPH + 4 H(+). The protein operates within sulfur metabolism; hydrogen sulfide biosynthesis; hydrogen sulfide from sulfite (NADPH route): step 1/1. In terms of biological role, component of the sulfite reductase complex that catalyzes the 6-electron reduction of sulfite to sulfide. This is one of several activities required for the biosynthesis of L-cysteine from sulfate. The sequence is that of Sulfite reductase [NADPH] hemoprotein beta-component from Nitrosomonas eutropha (strain DSM 101675 / C91 / Nm57).